A 658-amino-acid polypeptide reads, in one-letter code: Deoxynucleoside triphosphate triphosphohydrolase SAMHD1 (658 aa).

The disordered stretch occupies residues 23-68 (SQPRVSEVAMQSAPLEQPAKRPRCDGSPRTPPSTPPATANLSADDD). Residue serine 49 is modified to Phosphoserine. Position 52 is a phosphothreonine (threonine 52). The residue at position 55 (serine 55) is a Phosphoserine. At threonine 56 the chain carries Phosphothreonine. A phosphoserine mark is found at serine 64 and serine 125. Residues 77–142 (WEPEDVCSFL…IECIQQLSQS (66 aa)) form the SAM domain. Residues lysine 148 and valine 149 each contribute to the GTP site. Asparagine 151 is a dGTP binding site. 3 residues coordinate GTP: aspartate 169, glutamine 174, and arginine 177. Residues leucine 182 and valine 188 each contribute to the dGTP site. An HD domain is found at 196–348 (RFEHSLGVGY…GIDVDKWDYF (153 aa)). Residues histidine 199, histidine 238, and aspartate 239 each coordinate Mn(2+). Residues aspartate 239, histidine 247, histidine 265, and glutamate 266 each contribute to the dGTP site. The active site involves histidine 265. Aspartate 343 contributes to the Mn(2+) binding site. 9 residues coordinate dGTP: tyrosine 347, aspartate 351, arginine 365, arginine 395, lysine 397, asparagine 401, tyrosine 417, histidine 419, and lysine 420. Arginine 494 and lysine 498 together coordinate GTP. Lysine 509 participates in a covalent cross-link: Glycyl lysine isopeptide (Lys-Gly) (interchain with G-Cter in SUMO2). GTP is bound at residue lysine 565. Lysine 565 contributes to the dGTP binding site. Phosphothreonine is present on threonine 634. Residue threonine 634 is modified to (Microbial infection) Phosphothreonine.

Belongs to the SAMHD1 family. Homodimer; in absence of GTP and dNTP. Homotetramer; in GTP- and dNTP-bound form. Interacts with MRE11; leading to stimulate the exonuclease activity of MRE11. Interacts with RBBP8/CtIP. Interacts with RBBP8/CtIP. Interacts (via its C-terminus) with CD81. The cofactor is Zn(2+). In terms of processing, phosphorylation at Thr-634 by CDK1 acts as a switch to control deoxynucleoside triphosphate (dNTPase)-dependent and -independent functions. Phosphorylation at Thr-634 takes place in cycling cells: it reduces the stability of the homotetramer, impairing the dNTPase activity and subsequent ability to restrict infection by viruses. It also inhibits ability to suppress LINE-1 retrotransposon activity. In contrast, phosphorylation at Thr-634 promotes DNA end resection at stalled replication forks in response to DNA damage. Post-translationally, (Microbial infection) Phosphorylation at Thr-634 by mouse cytomegalovirus kinase M97 leads to a reduced level of dNTP hydrolase activity and the loss of viral restriction. Not phosphorylated by CDK1 at the C-terminus.

It localises to the nucleus. The protein resides in the chromosome. It carries out the reaction a 2'-deoxyribonucleoside 5'-triphosphate + H2O = a 2'-deoxyribonucleoside + triphosphate + H(+). It catalyses the reaction dATP + H2O = 2'-deoxyadenosine + triphosphate + H(+). The catalysed reaction is dCTP + H2O = 2'-deoxycytidine + triphosphate + H(+). The enzyme catalyses dGTP + H2O = 2'-deoxyguanosine + triphosphate + H(+). It carries out the reaction dTTP + H2O = thymidine + triphosphate + H(+). Its activity is regulated as follows. Allosterically activated and regulated via the combined actions of GTP and dNTPs (dATP, dGTP, dTTP and dCTP): Allosteric site 1 binds GTP, while allosteric site 2 binds dNTP. Allosteric activation promotes the formation of highly active homotetramers. Isoform 1: Phosphorylation at Thr-634 impairs homotetramerization, thereby inhibiting dNTPase activity, leading to reduced ability to restrict infection by viruses. Protein that acts both as a host restriction factor involved in defense response to virus and as a regulator of DNA end resection at stalled replication forks. Has deoxynucleoside triphosphate (dNTPase) activity, which is required to restrict infection by viruses: dNTPase activity reduces cellular dNTP levels to levels too low for retroviral reverse transcription to occur, blocking early-stage virus replication in dendritic and other myeloid cells. Likewise, suppresses LINE-1 retrotransposon activity. In addition to virus restriction, dNTPase activity acts as a regulator of DNA precursor pools by regulating dNTP pools. Phosphorylation at Thr-634 acts as a switch to control dNTPase-dependent and -independent functions: it inhibits dNTPase activity and ability to restrict infection by viruses, while it promotes DNA end resection at stalled replication forks. Functions during S phase at stalled DNA replication forks to promote the resection of gapped or reversed forks: acts by stimulating the exonuclease activity of MRE11, activating the ATR-CHK1 pathway and allowing the forks to restart replication. Its ability to promote degradation of nascent DNA at stalled replication forks is required to prevent induction of type I interferons, thereby preventing chronic inflammation. Ability to promote DNA end resection at stalled replication forks is independent of dNTPase activity. Enhances immunoglobulin hypermutation in B-lymphocytes by promoting transversion mutation. The sequence is that of Deoxynucleoside triphosphate triphosphohydrolase SAMHD1 from Mus musculus (Mouse).